Here is a 203-residue protein sequence, read N- to C-terminus: Small ribosomal subunit protein uS4 (203 aa).

Residues 20–45 are disordered; it reads LPGLTRKRPKNTNPPGMHGAERKKKS. Positions 92–155 constitute an S4 RNA-binding domain; the sequence is MRLDCIVFRL…SSRKLVAAYA (64 aa).

Belongs to the universal ribosomal protein uS4 family. In terms of assembly, part of the 30S ribosomal subunit. Contacts protein S5. The interaction surface between S4 and S5 is involved in control of translational fidelity.

Its function is as follows. One of the primary rRNA binding proteins, it binds directly to 16S rRNA where it nucleates assembly of the body of the 30S subunit. With S5 and S12 plays an important role in translational accuracy. The polypeptide is Small ribosomal subunit protein uS4 (Synechococcus sp. (strain JA-3-3Ab) (Cyanobacteria bacterium Yellowstone A-Prime)).